The sequence spans 327 residues: Sphingomyelinase D (327 aa).

An N-terminal signal peptide occupies residues 1–23; it reads MQPLTRTICALFCLLLTLPLTFG. The active site involves histidine 52. The Mg(2+) site is built by glutamate 72, aspartate 74, and aspartate 117. An SMD-tail motif is present at residues 320–327; that stretch reads VTGADKLW.

This sequence belongs to the sphingomyelinase D/phospholipase D family. Requires Mg(2+) as cofactor.

The protein localises to the secreted. The catalysed reaction is a sphingomyelin + H2O = an N-acylsphing-4-enine 1-phosphate + choline + H(+). Functionally, catalyzes the hydrolysis of sphingomyelin. Sphingomyelinases D are produced by some spider in their venoms, but also by arthropods such as ticks, or pathogenic bacteria and fungi. They might play a role in pathogenicity through different mechanisms, such as membrane destabilization and host cell penetration, but also pulmonary inflammation and cutaneous lesions. The chain is Sphingomyelinase D from Paracoccidioides brasiliensis (strain Pb03).